The chain runs to 193 residues: ECF RNA polymerase sigma factor SigK (193 aa).

A sigma-70 factor domain-2 region spans residues 35–101; it reads LYDRTRSRVY…RRAVDRVRSE (67 aa). The Polymerase core binding signature appears at 59-62; it reads ETTQ. The segment at 140 to 187 is sigma-70 factor domain-4; it reads MGSLSDLQREAIQLAYYEGLTYVQVSERLSANLATIKSRMRGGIRGLK. The segment at residues 161–180 is a DNA-binding region (H-T-H motif); it reads YVQVSERLSANLATIKSRMR.

Belongs to the sigma-70 factor family. ECF subfamily. As to quaternary structure, interacts transiently with the RNA polymerase catalytic core formed by RpoA, RpoB, RpoC and RpoZ (2 alpha, 1 beta, 1 beta' and 1 omega subunit) to form the RNA polymerase holoenzyme that can initiate transcription. Interacts (via sigma-70 factor domain 4) with anti-sigma-K factor RskA.

Its function is as follows. Sigma factors are initiation factors that promote the attachment of RNA polymerase to specific initiation sites and are then released. Extracytoplasmic function (ECF) sigma factors are held in an inactive form by an anti-sigma factor until released by regulated intramembrane proteolysis. The polypeptide is ECF RNA polymerase sigma factor SigK (sigK) (Mycobacterium sp. (strain KMS)).